Here is a 109-residue protein sequence, read N- to C-terminus: Thioredoxin-like protein slr1139 (109 aa).

Positions 2 to 107 (SLLEITDAEF…LLELLKEELD (106 aa)) constitute a Thioredoxin domain. C31 and C34 form a disulfide bridge.

Belongs to the thioredoxin family.

The chain is Thioredoxin-like protein slr1139 from Synechocystis sp. (strain ATCC 27184 / PCC 6803 / Kazusa).